We begin with the raw amino-acid sequence, 1305 residues long: Rho GTPase-activating protein 33 (1305 aa).

A disordered region spans residues 1-64 (MLQAQKQSDP…KPGKRLSAPR (64 aa)). At Ser-32 the chain carries Phosphoserine. The region spanning 83–192 (FGHIQLLLSP…CGPVLTWMEL (110 aa)) is the PX; atypical domain. The 63-residue stretch at 210 to 272 (PAVAAAHVVK…PSECVELFTE (63 aa)) folds into the SH3 domain. The 196-residue stretch at 339–534 (CDLGEHLSNS…FLLTHVEVLF (196 aa)) folds into the Rho-GAP domain. 3 disordered regions span residues 575 to 818 (RTQG…LDIS), 864 to 1054 (LSDT…SFFS), and 1115 to 1305 (SYSG…RSYC). Over residues 582-595 (TPTEPTTPKTPASP) the composition is skewed to low complexity. Phosphoserine is present on Ser-594. A compositionally biased stretch (basic and acidic residues) spans 596 to 608 (VERRKRERAEKQR). The span at 646–669 (SGSRPDTVTLRSAKSEESLSSQAS) shows a compositional bias: polar residues. Ser-660 is subject to Phosphoserine. A compositionally biased stretch (low complexity) spans 694 to 733 (APAGSCESLSSSSSSSSSSSSSSSSESSAGGLGPLSGSPS). Phosphoserine is present on Ser-749. Residues 774-786 (PGDPAPPASPAPP) are compositionally biased toward pro residues. Residues 787 to 798 (ASASAFPPRATP) are compositionally biased toward low complexity. Residues 864-873 (LSDTCQQEIS) are compositionally biased toward polar residues. Pro residues predominate over residues 895 to 915 (LLPPPLPLLRPGGAPPPPPKN). The segment covering 916–940 (PARLMALALAERAQQVAEQQSQQEQ) has biased composition (low complexity). 3 stretches are compositionally biased toward polar residues: residues 992 to 1020 (RQQS…SQVS), 1039 to 1054 (SPCS…SFFS), and 1115 to 1125 (SYSGPSRSWSP). Tyr-1188 bears the Phosphotyrosine mark. Low complexity predominate over residues 1194–1208 (GPRGPSPASSSSSSP). An Omega-N-methylarginine modification is found at Arg-1263. Positions 1292–1305 (SWSLHSEGQTRSYC) are enriched in polar residues.

Belongs to the PX domain-containing GAP family. In terms of assembly, specifically interacts with CDC42 and RHOQ/TC10 through its Rho-GAP domain. Interacts with NEK6. Highly expressed in brain and testis. Also expressed in white adipose tissue (WAT) and muscle at a low level.

The protein resides in the cell membrane. May be involved in several stages of intracellular trafficking. Could play an important role in the regulation of glucose transport by insulin. May act as a downstream effector of RHOQ/TC10 in the regulation of insulin-stimulated glucose transport. The sequence is that of Rho GTPase-activating protein 33 (Arhgap33) from Mus musculus (Mouse).